Here is a 496-residue protein sequence, read N- to C-terminus: L-arabinose isomerase (496 aa).

Residues glutamate 305, glutamate 330, histidine 347, and histidine 446 each contribute to the Mn(2+) site.

It belongs to the arabinose isomerase family. Requires Mn(2+) as cofactor.

It catalyses the reaction beta-L-arabinopyranose = L-ribulose. It functions in the pathway carbohydrate degradation; L-arabinose degradation via L-ribulose; D-xylulose 5-phosphate from L-arabinose (bacterial route): step 1/3. Its function is as follows. Catalyzes the conversion of L-arabinose to L-ribulose. In Bacillus subtilis (strain 168), this protein is L-arabinose isomerase.